The sequence spans 543 residues: MMPTPVILLKEGTDSSQGIPQLVSNISACQVIAEAVRTTLGPRGMDKLIVDGRGKATISNDGATILKLLDVVHPAAKTLVDIAKSQDAEVGDGTTSVTLLAAEFLKQVKPYVEEGLHPQIIIRAFRTATQLAVNKIKEIAVTVKKADKVEQRKLLEKCAMTALSSKLISQQKAFFAKMVVDAVMMLDDLLQLKMIGIKKVQGGALEDSQLVAGVAFKKTFSYAGFEMQPKKYHNPKIALLNVELELKAEKDNAEIRVHTVEDYQAIVDAEWNILYDKLEKIHHSGAKVVLSKLPIGDVATQYFADRDMFCAGRVPEEDLKRTMMACGGSIQTSVNALSADVLGRCQVFEETQIGGERYNFFTGCPKAKTCTFILRGGAEQFMEETERSLHDAIMIVRRAIKNDSVVAGGGAIEMELSKYLRDYSRTIPGKQQLLIGAYAKALEIIPRQLCDNAGFDATNILNKLRARHAQGGTWYGVDINNEDIADNFEAFVWEPAMVRINALTAASEAACLIVSVDETIKNPRSTVDAPTAAGRGRGRGRPH.

Position 1 is an N-acetylmethionine (Met1). An ADP-binding site is contributed by Gly41. Gly41 lines the ATP pocket. Lys67 is modified (N6-acetyllysine). Asp92 provides a ligand contact to Mg(2+). Positions 93, 94, 95, 96, 164, and 165 each coordinate ADP. Gly93 contributes to the ATP binding site. Ser96 contacts ATP. 2 positions are modified to N6-acetyllysine: Lys250 and Lys320. ATP contacts are provided by Arg398 and Gly409. Residue Gly409 participates in ADP binding. Lys430 is covalently cross-linked (Glycyl lysine isopeptide (Lys-Gly) (interchain with G-Cter in SUMO2)). 2 residues coordinate ADP: Glu494 and Arg499. Arg499 contacts ATP. The tract at residues 524–543 (RSTVDAPTAAGRGRGRGRPH) is disordered. An Omega-N-methylarginine modification is found at Arg535.

The protein belongs to the TCP-1 chaperonin family. As to quaternary structure, component of the chaperonin-containing T-complex (TRiC), a hexadecamer composed of two identical back-to-back stacked rings enclosing a protein folding chamber. Each ring is made up of eight different subunits: TCP1/CCT1, CCT2, CCT3, CCT4, CCT5, CCT6A/CCT6, CCT7, CCT8. Interacts with PACRG. Interacts with DLEC1.

Its subcellular location is the cytoplasm. The enzyme catalyses ATP + H2O = ADP + phosphate + H(+). In terms of biological role, component of the chaperonin-containing T-complex (TRiC), a molecular chaperone complex that assists the folding of actin, tubulin and other proteins upon ATP hydrolysis. The TRiC complex mediates the folding of WRAP53/TCAB1, thereby regulating telomere maintenance. The sequence is that of T-complex protein 1 subunit eta (CCT7) from Homo sapiens (Human).